The following is a 204-amino-acid chain: phospholipase A2 inhibitor and Ly6/PLAUR domain-containing protein (204 aa).

Positions 1 to 26 (MRLSRRPETFLLAFVLLCTLLGLGCP) are cleaved as a signal peptide. In terms of domain architecture, UPAR/Ly6 spans 27–117 (LHCEICTAAG…NSAFLSVPLT (91 aa)). Cystine bridges form between Cys-29–Cys-53, Cys-32–Cys-39, Cys-46–Cys-74, Cys-80–Cys-101, Cys-102–Cys-107, Cys-126–Cys-151, and Cys-144–Cys-172.

The protein belongs to the CNF-like-inhibitor family.

It localises to the secreted. This chain is phospholipase A2 inhibitor and Ly6/PLAUR domain-containing protein (PINLYP), found in Homo sapiens (Human).